The sequence spans 273 residues: Methylthioribulose-1-phosphate dehydratase (273 aa).

The segment at 1–27 is disordered; it reads MCPTCPPSAASASSENNNTDNNDHLVL. Cys114 contributes to the substrate binding site. Zn(2+)-binding residues include His132 and His134. Glu168 serves as the catalytic Proton donor/acceptor. Zn(2+) is bound at residue His225.

Belongs to the aldolase class II family. MtnB subfamily. Requires Zn(2+) as cofactor.

The protein resides in the cytoplasm. The enzyme catalyses 5-(methylsulfanyl)-D-ribulose 1-phosphate = 5-methylsulfanyl-2,3-dioxopentyl phosphate + H2O. The protein operates within amino-acid biosynthesis; L-methionine biosynthesis via salvage pathway; L-methionine from S-methyl-5-thio-alpha-D-ribose 1-phosphate: step 2/6. Functionally, catalyzes the dehydration of methylthioribulose-1-phosphate (MTRu-1-P) into 2,3-diketo-5-methylthiopentyl-1-phosphate (DK-MTP-1-P). In Sordaria macrospora (strain ATCC MYA-333 / DSM 997 / K(L3346) / K-hell), this protein is Methylthioribulose-1-phosphate dehydratase.